Consider the following 117-residue polypeptide: Ribonuclease P protein component (117 aa).

Belongs to the RnpA family. As to quaternary structure, consists of a catalytic RNA component (M1 or rnpB) and a protein subunit.

It catalyses the reaction Endonucleolytic cleavage of RNA, removing 5'-extranucleotides from tRNA precursor.. RNaseP catalyzes the removal of the 5'-leader sequence from pre-tRNA to produce the mature 5'-terminus. It can also cleave other RNA substrates such as 4.5S RNA. The protein component plays an auxiliary but essential role in vivo by binding to the 5'-leader sequence and broadening the substrate specificity of the ribozyme. In Thermotoga sp. (strain RQ2), this protein is Ribonuclease P protein component.